The primary structure comprises 513 residues: ATP synthase subunit alpha (513 aa).

169-176 (GDRQTGKT) is an ATP binding site.

The protein belongs to the ATPase alpha/beta chains family. F-type ATPases have 2 components, CF(1) - the catalytic core - and CF(0) - the membrane proton channel. CF(1) has five subunits: alpha(3), beta(3), gamma(1), delta(1), epsilon(1). CF(0) has three main subunits: a(1), b(2) and c(9-12). The alpha and beta chains form an alternating ring which encloses part of the gamma chain. CF(1) is attached to CF(0) by a central stalk formed by the gamma and epsilon chains, while a peripheral stalk is formed by the delta and b chains.

Its subcellular location is the cell inner membrane. The enzyme catalyses ATP + H2O + 4 H(+)(in) = ADP + phosphate + 5 H(+)(out). Functionally, produces ATP from ADP in the presence of a proton gradient across the membrane. The alpha chain is a regulatory subunit. The protein is ATP synthase subunit alpha of Halorhodospira halophila (strain DSM 244 / SL1) (Ectothiorhodospira halophila (strain DSM 244 / SL1)).